The sequence spans 135 residues: HTH-type transcriptional regulator DicA (135 aa).

The HTH cro/C1-type domain maps to 12–66; the sequence is IRYRRKNLKHTQRSLAKALKISHVSVSQWERGDSEPTGKNLFALSKVLQCSPTWI. Positions 23–42 form a DNA-binding region, H-T-H motif; sequence QRSLAKALKISHVSVSQWER.

In terms of biological role, this protein is a repressor of division inhibition gene dicB. In Escherichia coli (strain K12), this protein is HTH-type transcriptional regulator DicA (dicA).